We begin with the raw amino-acid sequence, 281 residues long: Probable endonuclease 4 (281 aa).

Zn(2+) contacts are provided by His-68, His-108, Glu-145, Asp-179, His-182, His-216, Asp-229, His-231, and Glu-261.

The protein belongs to the AP endonuclease 2 family. It depends on Zn(2+) as a cofactor.

It catalyses the reaction Endonucleolytic cleavage to 5'-phosphooligonucleotide end-products.. Its function is as follows. Endonuclease IV plays a role in DNA repair. It cleaves phosphodiester bonds at apurinic or apyrimidinic (AP) sites, generating a 3'-hydroxyl group and a 5'-terminal sugar phosphate. This Trichlorobacter lovleyi (strain ATCC BAA-1151 / DSM 17278 / SZ) (Geobacter lovleyi) protein is Probable endonuclease 4.